The chain runs to 686 residues: Acyl-CoA synthetase short-chain family member 3, mitochondrial (686 aa).

The transit peptide at 1–29 directs the protein to the mitochondrion; it reads MKPSWLQCHKVTSAGGLGGPLPGSSPARG. 227-230 lines the CoA pocket; the sequence is EPGR. ATP is bound by residues 425-427 and 446-451; these read GER and DHWWQT. K518 is subject to N6-succinyllysine. K524 is modified (N6-acetyllysine). Positions 539, 554, and 565 each coordinate ATP. R624 provides a ligand contact to CoA.

It belongs to the ATP-dependent AMP-binding enzyme family.

It localises to the mitochondrion matrix. The enzyme catalyses acetate + ATP + CoA = acetyl-CoA + AMP + diphosphate. It catalyses the reaction propanoate + ATP + CoA = propanoyl-CoA + AMP + diphosphate. It carries out the reaction butanoate + ATP + CoA = butanoyl-CoA + AMP + diphosphate. Functionally, catalyzes the synthesis of acetyl-CoA from short-chain fatty acids. Propionate is the preferred substrate but can also utilize acetate and butyrate with a much lower affinity. In Pongo abelii (Sumatran orangutan), this protein is Acyl-CoA synthetase short-chain family member 3, mitochondrial (ACSS3).